A 350-amino-acid polypeptide reads, in one-letter code: Neuronal-specific septin-3 (350 aa).

The segment covering 1–10 (MSKGLPEART) has biased composition (basic and acidic residues). Residues 1-29 (MSKGLPEARTDAAMSELVPEPRPKPAVPM) form a disordered region. The region spanning 58-331 (TGFDFNIMVV…ETYRAKRLND (274 aa)) is the Septin-type G domain. The interval 68-75 (GQSGLGKS) is G1 motif. 68-75 (GQSGLGKS) lines the GTP pocket. Ser91 carries the post-translational modification Phosphoserine. Thr102 lines the GTP pocket. Residues 125 to 128 (DTPG) form a G3 motif region. The segment at 207-210 (AKAD) is G4 motif. Residues 208 to 216 (KADTMTLEE), Gly265, and Arg280 contribute to the GTP site. The interval 328-350 (RLNDNGGLPPVSVDTEESHDSNP) is disordered.

Belongs to the TRAFAC class TrmE-Era-EngA-EngB-Septin-like GTPase superfamily. Septin GTPase family. As to quaternary structure, septins polymerize into heterooligomeric protein complexes that form filaments, and can associate with cellular membranes, actin filaments and microtubules. GTPase activity is required for filament formation. Post-translationally, phosphorylated by PKG on serine residues. Phosphorylated by PKG on Ser-91. As to expression, expressed in the brain including the cerebrum, hippocampus and cerebellum (at protein level).

Its subcellular location is the cytoplasm. It is found in the cytoskeleton. The protein resides in the synapse. Its function is as follows. Filament-forming cytoskeletal GTPase. May play a role in cytokinesis (Potential). This is Neuronal-specific septin-3 from Mus musculus (Mouse).